A 163-amino-acid polypeptide reads, in one-letter code: Gas vesicle protein H2 (163 aa).

The interval 57–92 is disordered; the sequence is LGSDARSPSTPAGNADDAGDAETAHIETRASDDSDD. Residues 78–88 show a composition bias toward basic and acidic residues; it reads ETAHIETRASD.

Belongs to the gas vesicle GvpH family. GvpF to GvpM interact with each other in vitro, and may form multi-subunit complex(es). Interacts with GvpC. Might interact with GvpA.

Its subcellular location is the gas vesicle. The protein resides in the cytoplasm. Its function is as follows. A minor component of the gas vesicle, also found in soluble extracts. Proteins GvpF to GvpM might be involved in nucleating gas vesicle formation. Gas vesicles are hollow, gas filled proteinaceous nanostructures found in several microbial planktonic microorganisms. They allow positioning of halobacteria at the optimal depth for growth in the poorly aerated, shallow brine pools of their habitat. In terms of biological role, expression of 2 c-vac DNA fragments containing 2 divergently transcribed regions (gvpE-gvpF-gvpG-gvpH-gvpI-gvpJ-gvpK-gvpL-gvpM and gvpA-gvpC-gvpN-gvpO) allows H.volcanii to produce gas vesicles. This Halobacterium salinarum (strain ATCC 700922 / JCM 11081 / NRC-1) (Halobacterium halobium) protein is Gas vesicle protein H2.